The sequence spans 282 residues: DegV domain-containing protein spr1415 (282 aa).

Positions 3–280 (LAVFTDSSAY…AGSIALGYIP (278 aa)) constitute a DegV domain. Hexadecanoate is bound by residues threonine 61 and serine 94.

Its function is as follows. May bind long-chain fatty acids, such as palmitate, and may play a role in lipid transport or fatty acid metabolism. The protein is DegV domain-containing protein spr1415 of Streptococcus pneumoniae (strain ATCC BAA-255 / R6).